Here is a 282-residue protein sequence, read N- to C-terminus: Elongation factor Ts (282 aa).

The tract at residues 79-82 (TDFV) is involved in Mg(2+) ion dislocation from EF-Tu.

It belongs to the EF-Ts family.

It is found in the cytoplasm. Functionally, associates with the EF-Tu.GDP complex and induces the exchange of GDP to GTP. It remains bound to the aminoacyl-tRNA.EF-Tu.GTP complex up to the GTP hydrolysis stage on the ribosome. The polypeptide is Elongation factor Ts (Shewanella piezotolerans (strain WP3 / JCM 13877)).